Reading from the N-terminus, the 368-residue chain is MENMDDFSPENVLAPPPPPPPMKKSTDLFMQRSNSFVSKATRDSWDRMFDEAHGADVLIHTDDNGLIYAHSNVIGMASDVIRGMMKQHKRKSHRKSISILGVPHHALRVFIRFLYSSCYEKQDMEDFAIHLLVLSHVYVVPHLKRVCESEFESSLLNKENVIDVFQLALLCDAPRLGLLCHRMILNNFEEVSTSEGWQAMKESHPRLQKELLRSVAYELNSLKQRNRKQKEIQTYTQLYEAMEAFVHICRDGCREIGPTKTETPHMSCGFQACNGLEQLLKHLAGCKLRSIPGGCSRCKRMWQLLELHSRICVDSEQCKVPLCSSLKERMKTQSRKDEKRWKLLVRNVLSTKRIGGSPFFLQAIDVTL.

A disordered region spans residues 1–25; sequence MENMDDFSPENVLAPPPPPPPMKKS. Residues 55–123 enclose the BTB domain; the sequence is ADVLIHTDDN…LYSSCYEKQD (69 aa). A TAZ-type zinc finger spans residues 233-324; sequence QTYTQLYEAM…SEQCKVPLCS (92 aa). The interval 335 to 358 is caM-binding; sequence RKDEKRWKLLVRNVLSTKRIGGSP.

In terms of assembly, interacts with CUL3A. In terms of tissue distribution, preferentially expressed in young leaves, roots and stems.

It is found in the cytoplasm. It participates in protein modification; protein ubiquitination. Functionally, may act as a substrate-specific adapter of an E3 ubiquitin-protein ligase complex (CUL3-RBX1-BTB) which mediates the ubiquitination and subsequent proteasomal degradation of target proteins. The chain is BTB/POZ and TAZ domain-containing protein 5 (BT5) from Arabidopsis thaliana (Mouse-ear cress).